Reading from the N-terminus, the 740-residue chain is E3 ubiquitin-protein ligase DTX3L (740 aa).

Alanine 2 bears the N-acetylalanine mark. At serine 9 the chain carries Phosphoserine. Disordered stretches follow at residues 96–119, 195–231, and 524–551; these read NTRP…MHQH, SEQK…KAEQ, and HETP…SEAS. Composition is skewed to polar residues over residues 98–111 and 195–205; these read RPQI…QAET and SEQKQQFSPSM. Serine 202 is modified (phosphoserine). The span at 206-218 shows a compositional bias: basic and acidic residues; that stretch reads TERKPLSQQERDS. 3 positions are modified to phosphoserine: serine 221, serine 532, and serine 539. An RING-type zinc finger spans residues 561–600; it reads CVICMDTISNKKVLPKCKHEFCAPCINKAMSYKPICPTCQ.

This sequence belongs to the Deltex family. As to quaternary structure, homodimer and heterodimer. Can heterodimerize with DTX1, enhancing its ubiquitin ligase activity in vitro. Interacts (via N-terminus) with ADP ribosyltransferase PARP9/BAL1 (via PARP catalytic domain) forming a stable complex; the interaction is required to activate PARP9 but is dispensable for DTX3L catalytic activity. Forms a complex with STAT1 and PARP9 independently of IFNB1 or IFNG-mediated STAT1 'Tyr-701' phosphorylation. Found in a complex with PARP9, STAT1 and H2BC9. Found in a complex with E3 ligase ITCH and ESCRT-0 components HGS and STAM. Interacts (via C-terminus) with ITCH; the interaction is increased upon CXCL12 stimulation and inhibits ITCH catalytic activity; the interaction is direct. Interacts with HGS and STAM; the interaction brings together HGS and STAM and promotes their recruitment to early endosomes. In terms of assembly, (Microbial infection) Interacts with encephalomyocarditis virus (EMCV) C3 protease; the interaction results in C3 protease 'Lys-48'-linked ubiquitination. (Microbial infection) Interacts with human rhinovirus (HRV) C3 protease; the interaction results in C3 protease 'Lys-48'-linked ubiquitination. In terms of processing, autoubiquitinated.

It localises to the cytoplasm. The protein resides in the nucleus. Its subcellular location is the early endosome membrane. It is found in the lysosome membrane. The catalysed reaction is S-ubiquitinyl-[E2 ubiquitin-conjugating enzyme]-L-cysteine + [acceptor protein]-L-lysine = [E2 ubiquitin-conjugating enzyme]-L-cysteine + N(6)-ubiquitinyl-[acceptor protein]-L-lysine.. The protein operates within protein modification; protein ubiquitination. Binding to PARP9 enhances DTX3L catalytic activity. E3 ubiquitin-protein ligase which, in association with ADP-ribosyltransferase PARP9, plays a role in DNA damage repair and in interferon-mediated antiviral responses. Monoubiquitinates several histones, including histone H2A, H2B, H3 and H4. In response to DNA damage, mediates monoubiquitination of 'Lys-91' of histone H4 (H4K91ub1). The exact role of H4K91ub1 in DNA damage response is still unclear but it may function as a licensing signal for additional histone H4 post-translational modifications such as H4 'Lys-20' methylation (H4K20me). PARP1-dependent PARP9-DTX3L-mediated ubiquitination promotes the rapid and specific recruitment of 53BP1/TP53BP1, UIMC1/RAP80, and BRCA1 to DNA damage sites. By monoubiquitinating histone H2B H2BC9/H2BJ and thereby promoting chromatin remodeling, positively regulates STAT1-dependent interferon-stimulated gene transcription and thus STAT1-mediated control of viral replication. Independently of its catalytic activity, promotes the sorting of chemokine receptor CXCR4 from early endosome to lysosome following CXCL12 stimulation by reducing E3 ligase ITCH activity and thus ITCH-mediated ubiquitination of endosomal sorting complex required for transport ESCRT-0 components HGS and STAM. In addition, required for the recruitment of HGS and STAM to early endosomes. In association with PARP9, plays a role in antiviral responses by mediating 'Lys-48'-linked ubiquitination of encephalomyocarditis virus (EMCV) and human rhinovirus (HRV) C3 proteases and thus promoting their proteasomal-mediated degradation. This chain is E3 ubiquitin-protein ligase DTX3L (DTX3L), found in Homo sapiens (Human).